A 166-amino-acid polypeptide reads, in one-letter code: Lipoprotein signal peptidase (166 aa).

The next 3 helical transmembrane spans lie at 12-32, 70-90, and 102-122; these read WLWL…LILQ, WFFA…MYRS, and ALII…GFVV. Residues D123 and D141 contribute to the active site. A helical membrane pass occupies residues 137–157; the sequence is FNLADSAICIGAALIVLEGFL.

Belongs to the peptidase A8 family.

The protein localises to the cell inner membrane. The enzyme catalyses Release of signal peptides from bacterial membrane prolipoproteins. Hydrolyzes -Xaa-Yaa-Zaa-|-(S,diacylglyceryl)Cys-, in which Xaa is hydrophobic (preferably Leu), and Yaa (Ala or Ser) and Zaa (Gly or Ala) have small, neutral side chains.. It participates in protein modification; lipoprotein biosynthesis (signal peptide cleavage). Its function is as follows. This protein specifically catalyzes the removal of signal peptides from prolipoproteins. The chain is Lipoprotein signal peptidase from Salmonella choleraesuis (strain SC-B67).